The chain runs to 123 residues: uncharacterized protein (123 aa).

Polar residues predominate over residues 1–12 (MALNNVSLSSGD). 2 disordered regions span residues 1-25 (MALN…SHGD) and 53-91 (PRQA…RFSP). A compositionally biased stretch (basic and acidic residues) spans 61-82 (VRAESRRVDGGGRSPREPDGRG).

This is an uncharacterized protein from Homo sapiens (Human).